The sequence spans 507 residues: Dihydrolipoyl dehydrogenase 1, mitochondrial (507 aa).

Residues 1–36 constitute a mitochondrion transit peptide; that stretch reads MAMASLARRKAYFLTRNLSNSPTDALRFSFSLSRGF. FAD is bound by residues 73–82, Lys-91, Gly-155, and 184–186; these read EKRGALGGTC and TGS. A disulfide bridge connects residues Cys-82 and Cys-87. NAD(+) contacts are provided by residues 221 to 228, Glu-244, Val-278, and Gly-313; that span reads GAGYIGLE. FAD contacts are provided by residues Asp-354 and 360-363; that span reads MLAH. Catalysis depends on His-486, which acts as the Proton acceptor.

This sequence belongs to the class-I pyridine nucleotide-disulfide oxidoreductase family. In terms of assembly, homodimer. Part of both the glycine cleavage system composed of four proteins: P, T, L and H and of the pyruvate dehydrogenase complex containing multiple copies of three enzymatic components: pyruvate dehydrogenase (E1), dihydrolipoamide acetyltransferase (E2) and lipoamide dehydrogenase (E3). Requires FAD as cofactor. In terms of processing, S-nytrosylated at unknown positions. As to expression, preferentially expressed in leaves, flowers and siliques and at a lower level in roots and stems.

It is found in the mitochondrion matrix. The enzyme catalyses N(6)-[(R)-dihydrolipoyl]-L-lysyl-[protein] + NAD(+) = N(6)-[(R)-lipoyl]-L-lysyl-[protein] + NADH + H(+). Its function is as follows. Lipoamide dehydrogenase is a component of the glycine decarboxylase (GDC) or glycine cleavage system as well as of the alpha-ketoacid dehydrogenase complexes. LPD1 is probably the protein most often associated with the glycine decarboxylase complex while LPD2 is probably incorporated into alpha-ketoacid dehydrogenase complexes. The protein is Dihydrolipoyl dehydrogenase 1, mitochondrial (LPD1) of Arabidopsis thaliana (Mouse-ear cress).